A 509-amino-acid polypeptide reads, in one-letter code: Zinc finger CCCH-type with G patch domain-containing protein (509 aa).

The C3H1-type zinc-finger motif lies at 155 to 178 (PCNYYLEGECRFDEIRCRYSHGAL). The tract at residues 254-277 (EDELTSEDSSSSPHDESSDEIDSD) is disordered. One can recognise a G-patch domain in the interval 310-356 (TRGIGSKLMEKMGYIHGTGLGSEGRGIVTPVSAQILPQGRSLDACME). A disordered region spans residues 407-430 (LGGGESRHQGDQAAKKAKTNDLQQ). Residues 411 to 420 (ESRHQGDQAA) show a composition bias toward basic and acidic residues.

It is found in the nucleus. In terms of biological role, transcription repressor. The sequence is that of Zinc finger CCCH-type with G patch domain-containing protein from Drosophila pseudoobscura pseudoobscura (Fruit fly).